The following is an 868-amino-acid chain: Hopanoid transporter HpnN (868 aa).

The next 12 membrane-spanning stretches (helical) occupy residues 16-36 (FAAF…FYTY), 273-293 (GAVV…WMAL), 298-318 (IIFA…AVGL), 326-346 (LLSI…GIQF), 370-390 (YSAV…LSFL), 403-423 (IAGA…PALL), 452-472 (IAII…LYFM), 710-730 (IVAS…ILLW), 740-760 (ALTL…CVLI), 762-782 (LPLN…GVAF), 805-825 (AIFF…LSSH), and 834-854 (LLAL…PALM). Residues 299 to 425 (IFAVAANLVI…ITVLPALLKL (127 aa)) enclose the SSD domain.

The protein belongs to the resistance-nodulation-cell division (RND) (TC 2.A.6) family. MmpL subfamily.

It localises to the cell inner membrane. Essential for hopanoid transport from the cytoplasmic to the outer membrane. Required for the C(35) hopanoid, bacteriohopanetetrol, to remain localized to the mother cell type. The polypeptide is Hopanoid transporter HpnN (Rhodopseudomonas palustris (strain TIE-1)).